We begin with the raw amino-acid sequence, 431 residues long: ABSCISIC ACID-INSENSITIVE 5-like protein 7 (431 aa).

Positions 1-29 are disordered; that stretch reads MGTHINFNNLGGGGHPGGEGSSNQMKPTG. Over residues 10–20 the composition is skewed to gly residues; sequence LGGGGHPGGEG. A phosphoserine mark is found at Ser39 and Ser61. Ser110 carries the phosphoserine; by CPK32 modification. A disordered region spans residues 133 to 153; sequence DGNMEGSSGGGGESNVPPGRQ. Thr155 bears the Phosphothreonine mark. Over residues 319-331 the composition is skewed to polar residues; that stretch reads SPGTSSAENNSLS. A disordered region spans residues 319–338; the sequence is SPGTSSAENNSLSPVPYVLN. Positions 340-347 match the Nuclear localization signal motif; sequence GRRSNTGL. Residues 351–414 enclose the bZIP domain; sequence IERRQRRMIK…KNELKETSKR (64 aa). Positions 353–372 are basic motif; sequence RRQRRMIKNRESAARSRARK. Residues 372 to 411 are a coiled coil; the sequence is KQAYTLELEAEIEKLKKTNQELQKKQAEMVEMQKNELKET. Residues 379–393 are leucine-zipper; it reads LEAEIEKLKKTNQEL.

The protein belongs to the bZIP family. ABI5 subfamily. As to quaternary structure, DNA-binding heterodimer. Interacts with CPK32 and the AFP proteins AFP1, AFP2 and AFP3. Interacts with FREE1 (via C-terminus). Post-translationally, phosphorylated by CPK4 and CPK11 in vitro. Expressed in roots, leaves, flowers and immatures siliques.

The protein localises to the nucleus. Its function is as follows. Functions as a transcriptional activator in the ABA-inducible expression of LTI65/RD29B (AC Q04980). Binds specifically to the ABA-responsive element (ABRE) of the LTI65/RD29B (AC Q04980) gene promoter. Binds to the promoter of FREE1 and activates its transcription. This is ABSCISIC ACID-INSENSITIVE 5-like protein 7 from Arabidopsis thaliana (Mouse-ear cress).